Here is a 463-residue protein sequence, read N- to C-terminus: Protein phosphatase PP2A regulatory subunit B (463 aa).

WD repeat units follow at residues 27 to 66 and 87 to 128; these read TEADIISAVEFDHTGDYLATGDKGGRVVLFERNHSKKGCE and EIEE…LKVV. Phosphoserine is present on Ser134. WD repeat units follow at residues 174 to 212, 223 to 263, 282 to 320, and 337 to 378; these read AHAYHINSISVNSDAETYISADDLRINLWNLSISDHSFN, ELTE…LCDN, EIISSISDVKFSQNGRYILSRDYLTLKIWDVNMEKAPVK, and ENDC…PGDR.

Belongs to the phosphatase 2A regulatory subunit B family. In terms of assembly, PP2A exists in several trimeric forms, all of which consist of a core composed of a catalytic subunit associated with a 65 kDa (PR65) (Subunit A) and a 55 kDa (PR55) (Subunit B) regulatory subunit.

Phosphatase 2A affects a variety of biological processes in the cell such as transcription, cell cycle progression and cellular morphogenesis, and provides an initial identification of critical substrates for this phosphatase. The regulatory subunit may direct the catalytic subunit to distinct, albeit overlapping, subsets of substrates. The chain is Protein phosphatase PP2A regulatory subunit B (pab1) from Schizosaccharomyces pombe (strain 972 / ATCC 24843) (Fission yeast).